Consider the following 396-residue polypeptide: tRNA (guanine(9)-N1)-methyltransferase (396 aa).

Basic and acidic residues-rich tracts occupy residues 1–18 (MEDD…HDEV) and 52–73 (DRID…HGKD). A disordered region spans residues 1-109 (MEDDDRPRKY…KVKRKEKLVA (109 aa)). Residues 139–357 (TQKKFQRSTL…QVIPQRKGGK (219 aa)) enclose the SAM-dependent MTase TRM10-type domain. S-adenosyl-L-methionine is bound by residues 264-265 (LS), Gly-284, 288-292 (DKNRH), Cys-296, Leu-310, and 322-324 (QVL). The active-site Proton acceptor is the Asp-288. A disordered region spans residues 354-396 (KGGKLKSADHESEDQTPRESVEAVEAEPDGEGAAAEAGEGGKE). Basic and acidic residues predominate over residues 359–374 (KSADHESEDQTPRESV).

Belongs to the class IV-like SAM-binding methyltransferase superfamily. TRM10 family. In terms of assembly, monomer.

Its subcellular location is the cytoplasm. It localises to the nucleus. It catalyses the reaction guanosine(9) in tRNA + S-adenosyl-L-methionine = N(1)-methylguanosine(9) in tRNA + S-adenosyl-L-homocysteine + H(+). Functionally, S-adenosyl-L-methionine-dependent guanine N(1)-methyltransferase that catalyzes the formation of N(1)-methylguanine at position 9 (m1G9) in cytoplasmic tRNA. In Aspergillus fumigatus (strain ATCC MYA-4609 / CBS 101355 / FGSC A1100 / Af293) (Neosartorya fumigata), this protein is tRNA (guanine(9)-N1)-methyltransferase.